We begin with the raw amino-acid sequence, 562 residues long: Serine palmitoyltransferase 2 (562 aa).

A helical membrane pass occupies residues 67 to 87; the sequence is PMLVAVLTYVGYGVLTLFGYL. N6-(pyridoxal phosphate)lysine is present on Lys-379.

Belongs to the class-II pyridoxal-phosphate-dependent aminotransferase family. As to quaternary structure, component of the serine palmitoyltransferase (SPT) complex, which is composed of SPTLC1, SPTLC2 or SPTLC3 and SPTSSA or SPTSSB. The heterodimer consisting of SPTLC1 and SPTLC2/SPTLC3 forms the catalytic core of the enzyme, while SPTSSA or SPTSSB subunits determine substrate specificity. SPT also interacts with ORMDL proteins, especially ORMDL3, which negatively regulate SPT activity in the presence of ceramides. Forms dimers of heterodimers with SPTLC1. It depends on pyridoxal 5'-phosphate as a cofactor. As to expression, widely expressed.

It localises to the endoplasmic reticulum membrane. It catalyses the reaction L-serine + hexadecanoyl-CoA + H(+) = 3-oxosphinganine + CO2 + CoA. The enzyme catalyses octadecanoyl-CoA + L-serine + H(+) = 3-oxoeicosasphinganine + CO2 + CoA. It participates in lipid metabolism; sphingolipid metabolism. With respect to regulation, SPT complex catalytic activity is negatively regulated by ORMDL proteins, including ORMDL3, in the presence of ceramides. This mechanism allows to maintain ceramide levels at sufficient concentrations for the production of complex sphingolipids, but which prevents the accumulation of ceramides to levels that trigger apoptosis. In terms of biological role, component of the serine palmitoyltransferase multisubunit enzyme (SPT) that catalyzes the initial and rate-limiting step in sphingolipid biosynthesis by condensing L-serine and activated acyl-CoA (most commonly palmitoyl-CoA) to form long-chain bases. The SPT complex is composed of SPTLC1, SPTLC2 or SPTLC3 and SPTSSA or SPTSSB. Within this complex, the heterodimer consisting of SPTLC1 and SPTLC2/SPTLC3 forms the catalytic core. The composition of the serine palmitoyltransferase (SPT) complex determines the substrate preference. The SPTLC1-SPTLC2-SPTSSA complex shows a strong preference for C16-CoA substrate, while the SPTLC1-SPTLC3-SPTSSA isozyme uses both C14-CoA and C16-CoA as substrates, with a slight preference for C14-CoA. The SPTLC1-SPTLC2-SPTSSB complex shows a strong preference for C18-CoA substrate, while the SPTLC1-SPTLC3-SPTSSB isozyme displays an ability to use a broader range of acyl-CoAs, without apparent preference. Crucial for adipogenesis. This chain is Serine palmitoyltransferase 2, found in Homo sapiens (Human).